The sequence spans 944 residues: Tyrosine-protein kinase transmembrane receptor ROR2 (944 aa).

The first 33 residues, 1–33 (MARGWVRPSRVPLCARAVWTAAALLLWTPWTAG), serve as a signal peptide directing secretion. Residues 34 to 403 (EVEDSEAIDT…CSPRDGSKMG (370 aa)) lie on the Extracellular side of the membrane. The region spanning 55–145 (PTLKGYFLNF…VATNGLKTIT (91 aa)) is the Ig-like C2-type domain. N-linked (GlcNAc...) asparagine glycosylation occurs at Asn70. Intrachain disulfides connect Cys83/Cys135, Cys174/Cys239, Cys182/Cys232, Cys223/Cys264, Cys252/Cys300, Cys256/Cys286, Cys316/Cys394, Cys337/Cys377, and Cys365/Cys389. Residues 169-303 (QEDGFCQPYR…SPDAANCMRI (135 aa)) enclose the FZ domain. N-linked (GlcNAc...) asparagine glycosylation is present at Asn188. A Kringle domain is found at 316-394 (CYNGSGADYR…RVELCDVPPC (79 aa)). N-linked (GlcNAc...) asparagine glycosylation occurs at Asn318. The helical transmembrane segment at 404–424 (ILYILVPSIAIPLVIACLFFL) threads the bilayer. The Cytoplasmic portion of the chain corresponds to 425 to 944 (VCMCRNKQKA…TEAAHVQLEA (520 aa)). Residues 473–746 (VRFMEELGED…PRFKDIHSRL (274 aa)) form the Protein kinase domain. Residues 479–487 (LGEDRFGKV) and Lys507 each bind ATP. Asp615 acts as the Proton acceptor in catalysis. Tyr646 carries the phosphotyrosine; by autocatalysis modification. The interval 757–779 (SSAQTSGASNTTQTSSLSTSPVS) is disordered. Low complexity predominate over residues 765–779 (SNTTQTSSLSTSPVS). Residue Arg785 is modified to Asymmetric dimethylarginine. 2 disordered regions span residues 850–879 (QVPPQMVPKPSSHHSGSGSTSTGYVTTAPS) and 898–929 (QNIAEDVAQSPVQEAEEEEEGSVPETELLGDN). Residues 857–872 (PKPSSHHSGSGSTSTG) show a composition bias toward low complexity.

It belongs to the protein kinase superfamily. Tyr protein kinase family. ROR subfamily. Homodimer; promotes osteogenesis. Binds YWHAB. Interacts with WTIP. Interacts with ROR2. Requires Mg(2+) as cofactor.

It localises to the cell membrane. It carries out the reaction L-tyrosyl-[protein] + ATP = O-phospho-L-tyrosyl-[protein] + ADP + H(+). Functionally, tyrosine-protein kinase receptor which may be involved in the early formation of the chondrocytes. It seems to be required for cartilage and growth plate development. Phosphorylates YWHAB, leading to induction of osteogenesis and bone formation. In contrast, has also been shown to have very little tyrosine kinase activity in vitro. May act as a receptor for wnt ligand WNT5A which may result in the inhibition of WNT3A-mediated signaling. In Mus musculus (Mouse), this protein is Tyrosine-protein kinase transmembrane receptor ROR2 (Ror2).